A 433-amino-acid chain; its full sequence is 4-hydroxy-3-methylbut-2-en-1-yl diphosphate synthase (flavodoxin) (433 aa).

The [4Fe-4S] cluster site is built by cysteine 320, cysteine 323, cysteine 366, and glutamate 373.

This sequence belongs to the IspG family. [4Fe-4S] cluster is required as a cofactor.

It catalyses the reaction (2E)-4-hydroxy-3-methylbut-2-enyl diphosphate + oxidized [flavodoxin] + H2O + 2 H(+) = 2-C-methyl-D-erythritol 2,4-cyclic diphosphate + reduced [flavodoxin]. The protein operates within isoprenoid biosynthesis; isopentenyl diphosphate biosynthesis via DXP pathway; isopentenyl diphosphate from 1-deoxy-D-xylulose 5-phosphate: step 5/6. Its function is as follows. Converts 2C-methyl-D-erythritol 2,4-cyclodiphosphate (ME-2,4cPP) into 1-hydroxy-2-methyl-2-(E)-butenyl 4-diphosphate. The protein is 4-hydroxy-3-methylbut-2-en-1-yl diphosphate synthase (flavodoxin) of Beijerinckia indica subsp. indica (strain ATCC 9039 / DSM 1715 / NCIMB 8712).